The chain runs to 201 residues: ATP-dependent Clp protease proteolytic subunit 2 (201 aa).

Ser98 serves as the catalytic Nucleophile. His123 is an active-site residue.

This sequence belongs to the peptidase S14 family. Fourteen ClpP subunits assemble into 2 heptameric rings which stack back to back to give a disk-like structure with a central cavity, resembling the structure of eukaryotic proteasomes.

It localises to the cytoplasm. The enzyme catalyses Hydrolysis of proteins to small peptides in the presence of ATP and magnesium. alpha-casein is the usual test substrate. In the absence of ATP, only oligopeptides shorter than five residues are hydrolyzed (such as succinyl-Leu-Tyr-|-NHMec, and Leu-Tyr-Leu-|-Tyr-Trp, in which cleavage of the -Tyr-|-Leu- and -Tyr-|-Trp bonds also occurs).. Cleaves peptides in various proteins in a process that requires ATP hydrolysis. Has a chymotrypsin-like activity. Plays a major role in the degradation of misfolded proteins. The polypeptide is ATP-dependent Clp protease proteolytic subunit 2 (Pseudomonas aeruginosa (strain ATCC 15692 / DSM 22644 / CIP 104116 / JCM 14847 / LMG 12228 / 1C / PRS 101 / PAO1)).